The sequence spans 339 residues: MRVYYDRDADLNLIKGKKVAIVGYGSQGHAHALNLKDSGVKEVAIALRKDSSSVKKAEAAGFKVMDVAEAAKWADLVMMLTPDELQGDIYREHLHDNMKKGAALVFAHGLNVHFNLLDPRADLDVLMIAPKGPGHTVRSEYQRGGGVPCLIAIAKDVSGNAHDLGLSYASAVGGGRAGIIETTFKEECETDLFGEQVVLCGGLVELIKGGYETLVEAGYAPEMAYFECLHEVKLIVDLIYEGGIANMNYSISNTAEYGEYVTGPRIVTAETKAEMKRVLADIQGGKFARDWMLENKVNQTSFKATRAKLAAHPIEEVGAKLRDMMPWIKKGALVDKSKN.

Residues 1 to 182 (MRVYYDRDAD…GGGRAGIIET (182 aa)) enclose the KARI N-terminal Rossmann domain. NADP(+) contacts are provided by residues 24–27 (YGSQ), arginine 48, serine 51, serine 53, and 83–86 (DELQ). The active site involves histidine 108. Glycine 134 contributes to the NADP(+) binding site. Residues 183-328 (TFKEECETDL…AKLRDMMPWI (146 aa)) form the KARI C-terminal knotted domain. Aspartate 191, glutamate 195, glutamate 227, and glutamate 231 together coordinate Mg(2+). Serine 252 is a binding site for substrate.

Belongs to the ketol-acid reductoisomerase family. Mg(2+) is required as a cofactor.

The catalysed reaction is (2R)-2,3-dihydroxy-3-methylbutanoate + NADP(+) = (2S)-2-acetolactate + NADPH + H(+). It catalyses the reaction (2R,3R)-2,3-dihydroxy-3-methylpentanoate + NADP(+) = (S)-2-ethyl-2-hydroxy-3-oxobutanoate + NADPH + H(+). Its pathway is amino-acid biosynthesis; L-isoleucine biosynthesis; L-isoleucine from 2-oxobutanoate: step 2/4. The protein operates within amino-acid biosynthesis; L-valine biosynthesis; L-valine from pyruvate: step 2/4. Its function is as follows. Involved in the biosynthesis of branched-chain amino acids (BCAA). Catalyzes an alkyl-migration followed by a ketol-acid reduction of (S)-2-acetolactate (S2AL) to yield (R)-2,3-dihydroxy-isovalerate. In the isomerase reaction, S2AL is rearranged via a Mg-dependent methyl migration to produce 3-hydroxy-3-methyl-2-ketobutyrate (HMKB). In the reductase reaction, this 2-ketoacid undergoes a metal-dependent reduction by NADPH to yield (R)-2,3-dihydroxy-isovalerate. The sequence is that of Ketol-acid reductoisomerase (NADP(+)) from Bradyrhizobium diazoefficiens (strain JCM 10833 / BCRC 13528 / IAM 13628 / NBRC 14792 / USDA 110).